Here is a 165-residue protein sequence, read N- to C-terminus: Glucosamine 6-phosphate N-acetyltransferase (165 aa).

An N-acetyltransferase domain is found at 22–165; it reads FKVRPLAKDD…DDCNFMTQRF (144 aa). Substrate is bound by residues threonine 44, 92–95, and 104–106; these read KFIH and EDV. Position 114-119 (114-119) interacts with acetyl-CoA; the sequence is RQKLGA. Substrate contacts are provided by residues 135–136 and arginine 164; that span reads YK.

Belongs to the acetyltransferase family. GNA1 subfamily.

The catalysed reaction is D-glucosamine 6-phosphate + acetyl-CoA = N-acetyl-D-glucosamine 6-phosphate + CoA + H(+). Its pathway is nucleotide-sugar biosynthesis; UDP-N-acetyl-alpha-D-glucosamine biosynthesis; N-acetyl-alpha-D-glucosamine 1-phosphate from alpha-D-glucosamine 6-phosphate (route I): step 1/2. This chain is Glucosamine 6-phosphate N-acetyltransferase (gna-1), found in Caenorhabditis elegans.